Reading from the N-terminus, the 94-residue chain is Phosphoribosyl-ATP pyrophosphatase (94 aa).

This sequence belongs to the PRA-PH family.

It localises to the cytoplasm. It catalyses the reaction 1-(5-phospho-beta-D-ribosyl)-ATP + H2O = 1-(5-phospho-beta-D-ribosyl)-5'-AMP + diphosphate + H(+). The protein operates within amino-acid biosynthesis; L-histidine biosynthesis; L-histidine from 5-phospho-alpha-D-ribose 1-diphosphate: step 2/9. In Pyrobaculum arsenaticum (strain DSM 13514 / JCM 11321 / PZ6), this protein is Phosphoribosyl-ATP pyrophosphatase.